The chain runs to 475 residues: Peripherin (475 aa).

Residues 1 to 42 (MPSSASMSHHHSSGLRSSISSTSYRRTFGPPPSLSPGAFSYS) are disordered. The tract at residues 1 to 103 (MPSSASMSHH…FLATRSNEKQ (103 aa)) is head. The segment covering 14–26 (GLRSSISSTSYRR) has biased composition (low complexity). Tyrosine 24 is modified (3'-nitrotyrosine). 2 positions are modified to phosphoserine: serine 35 and serine 57. Position 66 is a phosphoserine; by PKB/AKT1 (serine 66). Positions 101 to 411 (EKQELQELND…KLLEGEESRI (311 aa)) constitute an IF rod domain. The tract at residues 104–136 (ELQELNDRFANFIEKVRFLEQQNAALRGELSQA) is coil 1A. A linker 1 region spans residues 137 to 147 (RGQEPARADQL). A coil 1B region spans residues 148–243 (CQQELRELRR…KLHEEELRDL (96 aa)). The segment at 244–266 (QVSVESQQVQQVEVEATVKPELT) is linker 2. The tract at residues 267–409 (AALRDIRAQY…YRKLLEGEES (143 aa)) is coil 2. Tyrosine 383 is subject to 3'-nitrotyrosine. Residues 410 to 475 (RISVPVHSFA…DLDKSSIHSY (66 aa)) are tail. The interval 453-475 (EKVVTESQKEQHSDLDKSSIHSY) is disordered. Tyrosine 475 is subject to Phosphotyrosine.

This sequence belongs to the intermediate filament family. In terms of assembly, forms homodimers (in vitro). Homopolymerizes into a filamentous network (in vitro). Forms heterodimers with NEFL, NEFM or NEFH (in vitro). Interacts with DST (via C-terminus). Interacts with RAB7A; the interaction is direct. Interacts with PRKCE (via phorbol-ester/DAG-type 2 domain). In terms of processing, phosphorylated; phosphorylation increases after nerve injury in regenerating neurons. As to expression, expressed in the sciatic nerve and at very low levels in the central nervous system (at protein level). Expressed in the spinal cord, in the sciatic nerve at the level of the dorsal root ganglion and in trigeminal nerves (at protein level). Expressed in the cranial nerves in the hindbrain, including the sensory and motor trigeminal neurons, the mesencephalic trigeminal neurons, the spinal trigeminal neurons, and in the facial nerve (at protein level). Expressed in the cerebellum, with expression in the inferior cerebellar peduncle and the lateral deep cerebellar nucleus (at protein level). Expressed in vestibulocochlear neurons, such as the anteroventral cochlear nucleus, the dorsal cochlear nucleus, the superficial granule cell layer and the granule cell lamina (at protein level). Expressed in glossopharyngeal, vagal and hypoglossal neurons (at protein level). Expressed in peripheral sensory neurons, in the dorsal root ganglia and the spinal cord, and to a lower extent in motor neurons. Expressed in the optic tract of the central nervous system, especially in the lateral geniculate nucleus and the superior colliculus. Expressed in neurons of the pineal stalk in the cortex. Expressed in the spinal trigeminal tract of the midbrain, in the medulla and in the medial cerebellar peduncle.

The protein localises to the cytoplasm. It is found in the cytoskeleton. The protein resides in the cell projection. Its subcellular location is the axon. It localises to the perikaryon. Its function is as follows. Class-III neuronal intermediate filament protein. May form an independent structural network without the involvement of other neurofilaments or may cooperate with the neuronal intermediate filament proteins NEFL, NEFH, NEFM and INA to form filamentous networks. Assembly of the neuronal intermediate filaments may be regulated by RAB7A. Plays a role in the development of unmyelinated sensory neurons. May be involved in axon elongation and axon regeneration after injury. Inhibits neurite extension in type II spiral ganglion neurons in the cochlea. The polypeptide is Peripherin (Prph) (Mus musculus (Mouse)).